Consider the following 152-residue polypeptide: Catabolic 3-dehydroquinase 1 (152 aa).

The active-site Proton acceptor is Tyr-24. Residues Asn-75, His-81, and Asp-88 each contribute to the substrate site. The active-site Proton donor is the His-101. Substrate is bound by residues Val-102–Ser-103 and Arg-112.

It belongs to the type-II 3-dehydroquinase family. As to quaternary structure, homododecamer. Adopts a ring-like structure, composed of an arrangement of two hexameric rings stacked on top of one another.

It catalyses the reaction 3-dehydroquinate = 3-dehydroshikimate + H2O. It participates in aromatic compound metabolism; 3,4-dihydroxybenzoate biosynthesis; 3,4-dihydroxybenzoate from 3-dehydroquinate: step 1/2. In terms of biological role, is involved in the catabolism of quinate. Allows the utilization of quinate as carbon source via the beta-ketoadipate pathway. The polypeptide is Catabolic 3-dehydroquinase 1 (Aspergillus terreus (strain NIH 2624 / FGSC A1156)).